A 202-amino-acid polypeptide reads, in one-letter code: Lipid A acyltransferase PagP (202 aa).

The N-terminal stretch at 1 to 25 (MNYKDIINACILSGVFLLHSPSALA) is a signal peptide. Residues histidine 74, aspartate 117, and serine 118 contribute to the active site.

This sequence belongs to the lipid A palmitoyltransferase family. As to quaternary structure, homodimer.

The protein localises to the cell outer membrane. It catalyses the reaction a lipid A + a 1,2-diacyl-sn-glycero-3-phosphocholine = a hepta-acyl lipid A + a 2-acyl-sn-glycero-3-phosphocholine. It carries out the reaction a lipid IVA + a 1,2-diacyl-sn-glycero-3-phosphocholine = a lipid IVB + a 2-acyl-sn-glycero-3-phosphocholine. The enzyme catalyses a lipid IIA + a 1,2-diacyl-sn-glycero-3-phosphocholine = a lipid IIB + a 2-acyl-sn-glycero-3-phosphocholine. In terms of biological role, transfers a fatty acid residue from the sn-1 position of a phospholipid to the N-linked hydroxyfatty acid chain on the proximal unit of lipid A or its precursors. The sequence is that of Lipid A acyltransferase PagP from Yersinia pseudotuberculosis serotype IB (strain PB1/+).